Consider the following 295-residue polypeptide: Glycine N-acyltransferase-like protein Keg1 (295 aa).

K41 bears the N6-acetyllysine; alternate mark. At K41 the chain carries N6-succinyllysine; alternate. K43 is subject to N6-acetyllysine. K48 is modified (N6-acetyllysine; alternate). K48 carries the N6-succinyllysine; alternate modification. 2 positions are modified to N6-acetyllysine: K80 and K83. K124, K128, and K140 each carry N6-acetyllysine; alternate. N6-succinyllysine; alternate is present on residues K124, K128, and K140. K150 bears the N6-acetyllysine mark. Position 255 is an N6-acetyllysine; alternate (K255). At K255 the chain carries N6-succinyllysine; alternate.

Belongs to the glycine N-acyltransferase family. Binds to microtubules. In terms of tissue distribution, specifically expressed in kidney and liver. Up-regulated in the regenerating liver as well as in hepatocellular carcinoma.

It is found in the cytoplasm. The protein resides in the cytoskeleton. Its subcellular location is the microtubule organizing center. It localises to the centrosome. It carries out the reaction an acyl-CoA + glycine = an N-acylglycine + CoA + H(+). Its function is as follows. Acyltransferase which transfers the acyl group to the N-terminus of glycine. Can conjugate a multitude of substrates to form a variety of N-acylglycines. The sequence is that of Glycine N-acyltransferase-like protein Keg1 (Keg1) from Rattus norvegicus (Rat).